The sequence spans 633 residues: Threonine--tRNA ligase (633 aa).

In terms of domain architecture, TGS spans 1-61; it reads MINIHFSNNL…IENCTFEVIT (61 aa). The catalytic stretch occupies residues 242-533; that stretch reads DHRKIGRELE…LIEHHSGKFP (292 aa). C333, H384, and H510 together coordinate Zn(2+).

Belongs to the class-II aminoacyl-tRNA synthetase family. Homodimer. Requires Zn(2+) as cofactor.

The protein resides in the cytoplasm. It catalyses the reaction tRNA(Thr) + L-threonine + ATP = L-threonyl-tRNA(Thr) + AMP + diphosphate + H(+). Its function is as follows. Catalyzes the attachment of threonine to tRNA(Thr) in a two-step reaction: L-threonine is first activated by ATP to form Thr-AMP and then transferred to the acceptor end of tRNA(Thr). Also edits incorrectly charged L-seryl-tRNA(Thr). In Ehrlichia chaffeensis (strain ATCC CRL-10679 / Arkansas), this protein is Threonine--tRNA ligase.